The primary structure comprises 157 residues: Probable succinate transporter subunit YjjB (157 aa).

4 consecutive transmembrane segments (helical) span residues 6-26 (FFMA…GFAM), 55-75 (AGFN…SIGI), 87-107 (VFTV…TAMI), and 129-149 (FLKA…PGLW).

It belongs to the ThrE exporter (TC 2.A.79) family. The transporter is composed of YjjB and YjjP.

Its subcellular location is the cell inner membrane. In terms of biological role, involved in succinate export with YjjP. Both proteins are required for export. The chain is Probable succinate transporter subunit YjjB from Salmonella arizonae (strain ATCC BAA-731 / CDC346-86 / RSK2980).